A 1802-amino-acid polypeptide reads, in one-letter code: MDNSMMDSTLRRILFFSNEFPSDDLKDLFRRLDQHSKDRRFRLLSIFLEESTAILKDEVSKLPRPLKELVPPFNSVLSLVDVDFRQGPLGAAMESSMLTILELGLFIGHYESEDTEWDLVPGQSVLAGLSIGILAAAAVALSSSLADVAKTGAEAVRVSFRLGVYVADISTKLEAPQSDGTLSSWAHVVTEMTEASVQDELKQFNTGTHSPELTKVFVSAADKTSVSVSGPPSRIKAAFQHSPVLRYSKSLPLPVYDGLCHASHLYTRSDIDSIINSSESVILPDRSVRLALLSSQTGKPFVAKTASDLFLEIGTELLTGTIYLDNVTAGIVQHLQPQSKETSSCQIDSFRTSLVLRGIHSAVEAELSRDRQLTRRDLVSWISRDFGPRRPRSQASSKLAIVGMACRLPGGANDLDLFWKLLEEGRDTLTTVPPDRFDLNTHYDPTGKTENATQTPYGNFIDRPGFFDAGFFNMSPREAEQTDPMQRLALVTAYEALEMAGVVPGRTPSTHPSRIGTFYGQASDDWRELNASQNISTYAVPGGERSFGNGRINYFFKFSGPSFNLDTACSSGLAAVQAACSALWAGEVDTAIAGGLNVITDPDNYCGLGNAHFLSKTGQCKVWDKDADGYCRADGIGSVVIKRLEDAEADNDNILAVVLGASTNHSAEAISITHPHAGAQKANYRQVLNQAGVNPIDVSYIELHGTGTQAGDAVESESVSDIFAPVTPRRRPDQRLYLGAVKSNIGHGEAAAGIASLLKALLVYQKNLIPKHIGIKSEINPTIPKDLERRNVGLAMQNTPWPRPAGKKRLAVVNSFGAHGGNTTLLLEDAPERVKIQGTEDRITHSILLSAKSKTSLQANMESLLSYLDQHPETSLADLAYTTSSRRMHHNMRFGTLVSSISGLQKMLRSQLDNPNFASEIRPVPNEAPSVILAFTGQGAYYHGMGSELFAEFPYFRAQVQQLDRLAQRLGFPSVVPVIENRIEDAPSSPILTQLSVVILEIALARFWSLLGVSISAVIGHSLGEYAALAVAGVISAADAIYLVGRRAQLVEERCAQASHSMLSVRASEDAIQEMLAVELETASITYEVSCCNTNQDTVIGGPKGEINDIRRALEAKSIKCTILDVPYAFHTAQMNPILDDLETLAKAVPFKAPSIPVISPLLATVIYDVKSLDANYLRRATRETVDFAAAIEAAQDMGLVDSKTIWIDVGPHPICAGLVRSMIPSASAIPSCRRNEDSIATISKGLVTLYLAGLTPSWVEFFKPREREYSLLYLPKYRWNETDYWIPYIGTWTLDKAHLKHGTKPKTPFSGSMSRPSALRTSLVHQITAETVEATTATLHTISDMQHPDFLEAIHGHTMNKCGVATSSIWSDMAFTVGEYLYRRLVPNTKDVHMNLTDVEVLHAQVASKTKGSVQPLVLRAHLDLSTNSMSLAWFNADGETGECAAESFATATIRFEDPEAWRKDWARLAHLVRGRIEVLEQRATEGKASRLSKPLAYALFKNVVDYADRYRGMDSVVLDELEAMAEVTLVPERYGTWHTPPHWIDSVSHLAGLVMNGSDASNTRDYFFVTPGCDSFRLLKKLEPGARYRSYVRMSPLPEDPNMHSGDVYILQGEEIVGMVGMIRFRRVPRLLMDRFFSPPTTTSVAVPVPPLTGATMKCKDITQTAPALPTPAPPIVVSSPVVSSTMACNIPEPAPLLATSSKSSTPKESPIVTPAESERAEPVDNSMTSQCLRLMARETGLEVEALTADASFVQLGVDSLMSLVLSEKFRAELGVEIKSSLFLECPTIGEMTAWIEEYC.

The N-terminal acylcarrier protein transacylase domain (SAT) stretch occupies residues 27 to 261 (DLFRRLDQHS…PLPVYDGLCH (235 aa)). Residues 396–829 (SSKLAIVGMA…GGNTTLLLED (434 aa)) form the Ketosynthase family 3 (KS3) domain. Residues cysteine 569, histidine 704, and histidine 747 each act as for beta-ketoacyl synthase activity in the active site. Residues 935–1235 (FTGQGAYYHG…SASAIPSCRR (301 aa)) are malonyl-CoA:ACP transacylase (MAT) domain. The product template (PT) domain stretch occupies residues 1322-1641 (TSLVHQITAE…RLLMDRFFSP (320 aa)). Positions 1326-1462 (HQITAETVEA…ATIRFEDPEA (137 aa)) are N-terminal hotdog fold. The region spanning 1326-1636 (HQITAETVEA…FRRVPRLLMD (311 aa)) is the PKS/mFAS DH domain. Histidine 1358 serves as the catalytic Proton acceptor; for dehydratase activity. Residues 1490-1636 (ASRLSKPLAY…FRRVPRLLMD (147 aa)) form a C-terminal hotdog fold region. The active-site Proton donor; for dehydratase activity is aspartate 1547. Positions 1699-1729 (LLATSSKSSTPKESPIVTPAESERAEPVDNS) are disordered. The segment covering 1702–1713 (TSSKSSTPKESP) has biased composition (low complexity). The 78-residue stretch at 1725-1802 (PVDNSMTSQC…EMTAWIEEYC (78 aa)) folds into the Carrier domain. Serine 1762 is subject to O-(pantetheine 4'-phosphoryl)serine.

Pantetheine 4'-phosphate serves as cofactor.

It participates in secondary metabolite biosynthesis. In terms of biological role, non-reducing polyketide synthase; part of the gene cluster that mediates the biosynthesis of neosartoricin B, a prenylated anthracenone that probably exhibits T-cell antiproliferative activity, suggestive of a physiological role as an immunosuppressive agent. The non-reducing polyketide synthase nscA probably synthesizes and cyclizes the decaketide backbone. The hydrolase nscB then mediates the product release through hydrolysis followed by spontaneous decarboxylation. The prenyltransferase nscD catalyzes the addition of the dimethylallyl group to the aromatic C5. The FAD-dependent monooxygenase nscC is then responsible for the stereospecific hydroxylation at C2. Neosartoricin B can be converted into two additional compounds neosartoricins C and D. Neosartoricin C is a spirocyclic compound that is cyclized through the attack of C3 hydroxyl on C14, followed by dehydration. On the other hand, neosartoricin D is a further cyclized compound in which attack of C2 on C14 in neosartoricin C results in the formation of the acetal-containing dioxabicyclo-octanone ring. Both of these compounds are novel and possibly represent related metabolites of the gene cluster. In Trichophyton tonsurans (strain CBS 112818) (Scalp ringworm fungus), this protein is Non-reducing polyketide synthase nscA.